We begin with the raw amino-acid sequence, 35 residues long: U2-agatoxin-Aop1a (35 aa).

Disulfide bonds link Cys-3–Cys-19, Cys-10–Cys-24, and Cys-18–Cys-34. Leu-35 carries the leucine amide modification.

Belongs to the neurotoxin 01 (U2-agtx) family. As to expression, expressed by the venom gland.

It is found in the secreted. Insect-selective toxin causing rapid but reversible paralysis in crickets. Suppresses the excitatory postsynaptic potentials evoked in lobster neuromuscular synaptic preparations, possibly by blocking the presynaptic calcium channel (Cav). Induces instantaneous reversible paralysis when injected into crickets. The protein is U2-agatoxin-Aop1a of Allagelena opulenta (Funnel weaving spider).